A 485-amino-acid polypeptide reads, in one-letter code: MSTVADTMQTLSNDIQLTFEELIKLLLRKTLKPILNPLGNNNIVYNSIKGKYERGLVNSANNDNINRYTYTMTKESLGWTDEILAHFRINAKFIKSSVPQRFPSNTKYHNMMKPNAKISFSDKETKNIINQCGENAICQYKNLLSMLNTRNVTGILANKKATFNYSSDIPYTYTFKELEDIGKDIIDQTDPSIPGCDSARMSTAMLRVRLYNLEQNLAKLSVDKPDIFDAYIDMLRIINGVPRKKIVWVIKLIALLTYQRWEDLDKQKHQKYYEILGDDFVNSFNSNELITILLQSNSSEYIIKASLLFPLLKMLFIVFGYSKLVPVISDINAEAQAAEHERLRKFYDKYKGATIRRQSDDQNKFYETECAENNFNADHAIKQIYGKADPEPIDQCVYDFIRLFGDLYPTLIGLMGGTEKFPPESIEINCNEIPHSYEDLTIIPEFLWRFNDFSYCRYLEYICSKQLHNVLNYKVNEKTRYLQSI.

Its subcellular location is the virion. This is an uncharacterized protein from Acanthamoeba polyphaga mimivirus (APMV).